The primary structure comprises 542 residues: Chaperonin GroEL 2 (542 aa).

Residues 29–32 (TLGP), 86–90 (DGTTT), Gly-413, 477–479 (NAA), and Asp-493 each bind ATP.

It belongs to the chaperonin (HSP60) family. In terms of assembly, forms a cylinder of 14 subunits composed of two heptameric rings stacked back-to-back. Interacts with the co-chaperonin GroES.

The protein resides in the cytoplasm. The enzyme catalyses ATP + H2O + a folded polypeptide = ADP + phosphate + an unfolded polypeptide.. Functionally, together with its co-chaperonin GroES, plays an essential role in assisting protein folding. The GroEL-GroES system forms a nano-cage that allows encapsulation of the non-native substrate proteins and provides a physical environment optimized to promote and accelerate protein folding. The protein is Chaperonin GroEL 2 of Kineococcus radiotolerans (strain ATCC BAA-149 / DSM 14245 / SRS30216).